A 307-amino-acid polypeptide reads, in one-letter code: Acyl transferase (307 aa).

Active-site charge relay system residues include S116, D213, and H243.

This sequence belongs to the LuxD family.

Its pathway is lipid metabolism; fatty acid reduction for biolumincescence. Functionally, acyl transferase is part of the fatty acid reductase system required for aldehyde biosynthesis; it produces fatty acids for the luminescent reaction. This is Acyl transferase from Photorhabdus luminescens (Xenorhabdus luminescens).